Reading from the N-terminus, the 625-residue chain is MMTPGKSSKTPIVGNLTTLGITIPDTVTSIGFKTFYGCSSFTSIIIPNSVTSIGTKAFTGCSSLTSITIGNSVTSFGQEAFSECSSITSITIPNSVTTIRDFAFSGCSKLTSITIPNSVTSLGSHAFRGCSGLTSIIIPDSVTLIRGSIFYGCSSLTSITIPNSVTSIYSSAFYGCSSLTSITIPDSVLDFGSAAFQECSKLTNIKIGNNVDSIGSLAFKRCSSLTNITIPDSVTTIANSAFYECSKLTSITIGKSVTRIEGNAFSKCYSLTSITIKTTNDITSSITTDVFLNCPITELIYETTGLTFLTYEYFKDKVTLIKFNIPKSDSNSMIRLQEITSLPTLTHFTNLNKVTIENINELTIPESFIEGDNFEILITNNIKSIDPNAFKDCSINKFTYLGTDKLENDFLKNAKSCEEVITSTKYSDNEIGGMTITHKQSEENPNQPGENPNQPGENPNQPGENPNQPGENPSQPGENPSQPGENPNQPGENPSQPGENPNQPGENPNQPGENPNQPGENPSQPGENTDDPSKSKENKAIKGGEIAGIIIGSLIGICLVVAICFGVYYYFMRIKPKNKNDDNEGNQEDTIANGTNEVTNENVLATFDEQPNNESDSNGLDSAEV.

The Extracellular segment spans residues 1–548 (MMTPGKSSKT…KAIKGGEIAG (548 aa)). Asparagine 15 carries an N-linked (GlcNAc...) asparagine glycan. LRR repeat units lie at residues 38-60 (CSSFTSIIIPNSVTSIGTKAFTG), 61-83 (CSSLTSITIGNSVTSFGQEAFSE), 85-106 (SSITSITIPNSVTTIRDFAFSG), 107-129 (CSKLTSITIPNSVTSLGSHAFRG), 153-175 (CSSLTSITIPNSVTSIYSSAFYG), 176-198 (CSSLTSITIPDSVLDFGSAAFQE), 200-221 (SKLTNIKIGNNVDSIGSLAFKR), 222-245 (CSSLTNITIPDSVTTIANSAFYEC), 247-267 (KLTSITIGKSVTRIEGNAFSK), 271-293 (LTSITIKTTNDITSSITTDVFLN), 325-347 (IPKSDSNSMIRLQEITSLPTLTH), 348-368 (FTNLNKVTIENINELTIPESF), and 369-392 (IEGDNFEILITNNIKSIDPNAFKD). Residue asparagine 227 is glycosylated (N-linked (GlcNAc...) asparagine). Positions 439–538 (KQSEENPNQP…TDDPSKSKEN (100 aa)) are disordered. Over residues 443 to 526 (ENPNQPGENP…QPGENPSQPG (84 aa)) the composition is skewed to low complexity. The chain crosses the membrane as a helical span at residues 549–571 (IIIGSLIGICLVVAICFGVYYYF). Topologically, residues 572 to 625 (MRIKPKNKNDDNEGNQEDTIANGTNEVTNENVLATFDEQPNNESDSNGLDSAEV) are cytoplasmic. The segment at 577-625 (KNKNDDNEGNQEDTIANGTNEVTNENVLATFDEQPNNESDSNGLDSAEV) is disordered. The span at 588 to 625 (EDTIANGTNEVTNENVLATFDEQPNNESDSNGLDSAEV) shows a compositional bias: polar residues.

The protein resides in the cell membrane. Its function is as follows. May bind host tissue. This is Putative surface protein bspA-like (BSPAL1) from Trichomonas vaginalis.